The following is a 298-amino-acid chain: Acetylglutamate kinase (298 aa).

Substrate contacts are provided by residues G69 to G70, R91, and N191.

It belongs to the acetylglutamate kinase family. ArgB subfamily.

It is found in the cytoplasm. The catalysed reaction is N-acetyl-L-glutamate + ATP = N-acetyl-L-glutamyl 5-phosphate + ADP. Its pathway is amino-acid biosynthesis; L-arginine biosynthesis; N(2)-acetyl-L-ornithine from L-glutamate: step 2/4. Functionally, catalyzes the ATP-dependent phosphorylation of N-acetyl-L-glutamate. The sequence is that of Acetylglutamate kinase from Neisseria meningitidis serogroup C / serotype 2a (strain ATCC 700532 / DSM 15464 / FAM18).